Here is a 149-residue protein sequence, read N- to C-terminus: Ribosome maturation factor RimP (149 aa).

Belongs to the RimP family.

It is found in the cytoplasm. In terms of biological role, required for maturation of 30S ribosomal subunits. The polypeptide is Ribosome maturation factor RimP (Neisseria meningitidis serogroup A / serotype 4A (strain DSM 15465 / Z2491)).